Here is a 342-residue protein sequence, read N- to C-terminus: tRNA-specific 2-thiouridylase MnmA (342 aa).

ATP is bound by residues 6-13 (LLSGGVDS) and L32. Residue C92 is the Nucleophile of the active site. An intrachain disulfide couples C92 to C191. ATP is bound at residue G116. Residues 138–140 (KDQ) form an interaction with tRNA region. The Cysteine persulfide intermediate role is filled by C191. Positions 293–294 (RY) are interaction with tRNA.

The protein belongs to the MnmA/TRMU family.

The protein localises to the cytoplasm. The enzyme catalyses S-sulfanyl-L-cysteinyl-[protein] + uridine(34) in tRNA + AH2 + ATP = 2-thiouridine(34) in tRNA + L-cysteinyl-[protein] + A + AMP + diphosphate + H(+). Catalyzes the 2-thiolation of uridine at the wobble position (U34) of tRNA, leading to the formation of s(2)U34. This is tRNA-specific 2-thiouridylase MnmA from Helicobacter pylori (strain ATCC 700392 / 26695) (Campylobacter pylori).